Reading from the N-terminus, the 467-residue chain is ATP synthase subunit beta (467 aa).

156–163 (GGAGVGKT) contributes to the ATP binding site.

The protein belongs to the ATPase alpha/beta chains family. F-type ATPases have 2 components, CF(1) - the catalytic core - and CF(0) - the membrane proton channel. CF(1) has five subunits: alpha(3), beta(3), gamma(1), delta(1), epsilon(1). CF(0) has three main subunits: a(1), b(2) and c(9-12). The alpha and beta chains form an alternating ring which encloses part of the gamma chain. CF(1) is attached to CF(0) by a central stalk formed by the gamma and epsilon chains, while a peripheral stalk is formed by the delta and b chains.

The protein localises to the cell inner membrane. It catalyses the reaction ATP + H2O + 4 H(+)(in) = ADP + phosphate + 5 H(+)(out). In terms of biological role, produces ATP from ADP in the presence of a proton gradient across the membrane. The catalytic sites are hosted primarily by the beta subunits. In Cupriavidus metallidurans (strain ATCC 43123 / DSM 2839 / NBRC 102507 / CH34) (Ralstonia metallidurans), this protein is ATP synthase subunit beta.